The chain runs to 271 residues: Tryptophan synthase alpha chain (271 aa).

Active-site proton acceptor residues include glutamate 49 and aspartate 60.

It belongs to the TrpA family. As to quaternary structure, tetramer of two alpha and two beta chains.

It carries out the reaction (1S,2R)-1-C-(indol-3-yl)glycerol 3-phosphate + L-serine = D-glyceraldehyde 3-phosphate + L-tryptophan + H2O. The protein operates within amino-acid biosynthesis; L-tryptophan biosynthesis; L-tryptophan from chorismate: step 5/5. In terms of biological role, the alpha subunit is responsible for the aldol cleavage of indoleglycerol phosphate to indole and glyceraldehyde 3-phosphate. The chain is Tryptophan synthase alpha chain from Burkholderia mallei (strain NCTC 10247).